Reading from the N-terminus, the 301-residue chain is MGSRYQRLEKIGEGSYGVVYRARDITTDVIVALKRIRLESVEEGVPCTAIREISILKELRHENIVRLLDVCHSENRLNLVFEYMEMDLKKYMDRASGNLDPATIQEFMRSLLKGVRFCHERNVLHRDLKPPNLLISREKELKLADFGLGRAFGIPVKKYTHEVVTLWYRSPDVLLGSTQYGTPVDIWSVGCIFAEMAIGAPLFAGKNDADQLLRIFRFLGTPSSQVWPSMNLYPNSTNMLSKPEFQQNLIATCDEQFQTHPAYAKLGPQGIDLLRRLLRYEPGERLTAAQALEHPYFSVEF.

The Protein kinase domain occupies 5–297 (YQRLEKIGEG…AAQALEHPYF (293 aa)). ATP-binding positions include 11 to 19 (IGEGSYGVV) and lysine 34. The residue at position 15 (serine 15) is a Phosphoserine. The residue at position 16 (tyrosine 16) is a Phosphotyrosine. Catalysis depends on aspartate 127, which acts as the Proton acceptor. Threonine 160 carries the post-translational modification Phosphothreonine; by CAK.

The protein belongs to the protein kinase superfamily. CMGC Ser/Thr protein kinase family. CDC2/CDKX subfamily. As to quaternary structure, forms a stable but non-covalent complex with a regulatory subunit and with a cyclin.

The enzyme catalyses L-seryl-[protein] + ATP = O-phospho-L-seryl-[protein] + ADP + H(+). It carries out the reaction L-threonyl-[protein] + ATP = O-phospho-L-threonyl-[protein] + ADP + H(+). Phosphorylation at Ser-15 or Tyr-16 inactivates the enzyme, while phosphorylation at Thr-160 activates it. Probably involved in the control of the cell cycle. The protein is Cell division control protein 2 homolog 1 (CRK1) of Trypanosoma congolense.